The primary structure comprises 565 residues: Phosphomethylpyrimidine synthase (565 aa).

Substrate is bound by residues asparagine 201, methionine 230, tyrosine 259, histidine 295, 315–317 (SRG), 356–359 (DGLR), and glutamate 395. Residue histidine 399 coordinates Zn(2+). Tyrosine 422 is a binding site for substrate. A Zn(2+)-binding site is contributed by histidine 463. Positions 543, 546, and 551 each coordinate [4Fe-4S] cluster.

The protein belongs to the ThiC family. Homodimer. The cofactor is [4Fe-4S] cluster.

It carries out the reaction 5-amino-1-(5-phospho-beta-D-ribosyl)imidazole + S-adenosyl-L-methionine = 4-amino-2-methyl-5-(phosphooxymethyl)pyrimidine + CO + 5'-deoxyadenosine + formate + L-methionine + 3 H(+). It participates in cofactor biosynthesis; thiamine diphosphate biosynthesis. Catalyzes the synthesis of the hydroxymethylpyrimidine phosphate (HMP-P) moiety of thiamine from aminoimidazole ribotide (AIR) in a radical S-adenosyl-L-methionine (SAM)-dependent reaction. The protein is Phosphomethylpyrimidine synthase of Ehrlichia canis (strain Jake).